The sequence spans 347 residues: Ornithine carbamoyltransferase (347 aa).

Carbamoyl phosphate is bound by residues 56-59 (STRT), Gln-83, Arg-107, and 134-137 (HPTQ). L-ornithine-binding positions include Asn-168, Asp-232, and 236–237 (SM). Residues 274–275 (CL) and Arg-320 contribute to the carbamoyl phosphate site.

This sequence belongs to the aspartate/ornithine carbamoyltransferase superfamily. OTCase family.

It is found in the cytoplasm. It carries out the reaction carbamoyl phosphate + L-ornithine = L-citrulline + phosphate + H(+). Reversibly catalyzes the transfer of the carbamoyl group from carbamoyl phosphate (CP) to the N(epsilon) atom of ornithine (ORN) to produce L-citrulline. This chain is Ornithine carbamoyltransferase, found in Blochmanniella floridana.